A 327-amino-acid polypeptide reads, in one-letter code: NADPH-dependent aldose reductase GRE3 (327 aa).

The active-site Proton donor is the Tyr49. Substrate is bound at residue His111. Position 219 to 286 (219 to 286 (SSFGPQSFIE…SSKKERLLGN (68 aa))) interacts with NADP(+).

Belongs to the aldo/keto reductase family. As to quaternary structure, monomer.

The protein localises to the cytoplasm. It localises to the nucleus. It catalyses the reaction an alditol + NAD(+) = an aldose + NADH + H(+). The enzyme catalyses an alditol + NADP(+) = an aldose + NADPH + H(+). Its function is as follows. Aldose reductase with a broad substrate specificity. Reduces the cytotoxic compound methylglyoxal (MG) to acetol and (R)-lactaldehyde under stress conditions. MG is synthesized via a bypath of glycolysis from dihydroxyacetone phosphate and is believed to play a role in cell cycle regulation and stress adaptation. In pentose-fermenting yeasts, aldose reductase catalyzes the reduction of xylose into xylitol. The purified enzyme catalyzes this reaction, but the inability of S.cerevisiae to grow on xylose as sole carbon source indicates that the physiological function is more likely methylglyoxal reduction. The sequence is that of NADPH-dependent aldose reductase GRE3 from Saccharomyces cerevisiae (strain ATCC 204508 / S288c) (Baker's yeast).